Reading from the N-terminus, the 261-residue chain is MQMVPPSAYDRAITVFSPEGRLYQVEYAREAVRRGTTAIGIACKDGVVLAVDRRITSKLVKIRSIEKIFQIDDHVAAATSGLVADARVLIDRARLEAQIYRLTYGEEISIEMLAKKICDIKQAYTQHGGVRPFGVSLLIAGIDKNEARLFETDPSGALIEYKATAIGSGRPVVMELLEKEYRDDITLDEGLELAITALTKANEDIKPENVDVCIITVKDAQFKKIPVEEIKKLIEKVKKKLNEENKKEEENREETKEKQEE.

The interval 242-261 is disordered; it reads NEENKKEEENREETKEKQEE.

Belongs to the peptidase T1A family. The 20S proteasome core is composed of 14 alpha and 14 beta subunits that assemble into four stacked heptameric rings, resulting in a barrel-shaped structure. The two inner rings, each composed of seven catalytic beta subunits, are sandwiched by two outer rings, each composed of seven alpha subunits. The catalytic chamber with the active sites is on the inside of the barrel. Has a gated structure, the ends of the cylinder being occluded by the N-termini of the alpha-subunits. Is capped at one or both ends by the proteasome regulatory ATPase, PAN.

The protein resides in the cytoplasm. Its activity is regulated as follows. The formation of the proteasomal ATPase PAN-20S proteasome complex, via the docking of the C-termini of PAN into the intersubunit pockets in the alpha-rings, triggers opening of the gate for substrate entry. Interconversion between the open-gate and close-gate conformations leads to a dynamic regulation of the 20S proteasome proteolysis activity. Functionally, component of the proteasome core, a large protease complex with broad specificity involved in protein degradation. The M.jannaschii proteasome is able to cleave oligopeptides after Glu, Asp, Tyr, Phe, Trp, slightly after Arg, but not after Ala. Thus, displays caspase-like and chymotrypsin-like activities and low level of trypsin-like activity. The sequence is that of Proteasome subunit alpha from Methanocaldococcus jannaschii (strain ATCC 43067 / DSM 2661 / JAL-1 / JCM 10045 / NBRC 100440) (Methanococcus jannaschii).